We begin with the raw amino-acid sequence, 147 residues long: Large ribosomal subunit protein uL13 (147 aa).

Belongs to the universal ribosomal protein uL13 family. As to quaternary structure, part of the 50S ribosomal subunit.

In terms of biological role, this protein is one of the early assembly proteins of the 50S ribosomal subunit, although it is not seen to bind rRNA by itself. It is important during the early stages of 50S assembly. In Renibacterium salmoninarum (strain ATCC 33209 / DSM 20767 / JCM 11484 / NBRC 15589 / NCIMB 2235), this protein is Large ribosomal subunit protein uL13.